We begin with the raw amino-acid sequence, 439 residues long: Divalent metal cation transporter MntH (439 aa).

11 helical membrane passes run 32 to 52 (GASM…AYMD), 67 to 87 (GYAL…FQSL), 121 to 141 (IAAM…LSLL), 144 to 164 (MPLL…LLLE), 173 to 193 (LAIG…LFIT), 214 to 234 (ALLI…LFLH), 261 to 281 (VVVA…MAAG), 301 to 321 (APLL…ASGI), 350 to 370 (AVTM…TQAL), 371 to 391 (VLSQ…LLWF), and 406 to 426 (FIAV…AVLI).

It belongs to the NRAMP family.

Its subcellular location is the cell inner membrane. H(+)-stimulated, divalent metal cation uptake system. The protein is Divalent metal cation transporter MntH of Verminephrobacter eiseniae (strain EF01-2).